The chain runs to 263 residues: Cobalt-precorrin-6A reductase (263 aa).

The protein belongs to the precorrin-6x reductase family.

The enzyme catalyses Co-precorrin-6B + NAD(+) = Co-precorrin-6A + NADH + H(+). Its pathway is cofactor biosynthesis; adenosylcobalamin biosynthesis; cob(II)yrinate a,c-diamide from sirohydrochlorin (anaerobic route): step 7/10. Functionally, catalyzes the reduction of the macrocycle of cobalt-precorrin-6A to cobalt-precorrin-6B. In Salmonella typhimurium (strain LT2 / SGSC1412 / ATCC 700720), this protein is Cobalt-precorrin-6A reductase (cbiJ).